The sequence spans 186 residues: Ribosome-recycling factor (186 aa).

Belongs to the RRF family.

The protein localises to the cytoplasm. In terms of biological role, responsible for the release of ribosomes from messenger RNA at the termination of protein biosynthesis. May increase the efficiency of translation by recycling ribosomes from one round of translation to another. The protein is Ribosome-recycling factor of Rhodopseudomonas palustris (strain ATCC BAA-98 / CGA009).